The primary structure comprises 1073 residues: Lon protease homolog, mitochondrial (1073 aa).

A mitochondrion-targeting transit peptide spans 1–27 (MIKASKCNKARALFLVRTSIPRTFIRN). 2 stretches are compositionally biased toward basic and acidic residues: residues 69–107 (FDSK…RKDI) and 113–123 (YDIKEETDSKP). The interval 69-173 (FDSKKEKQPS…DKEFLSPSDA (105 aa)) is disordered. Low complexity predominate over residues 132-150 (SSKSSISSSSGGANNNNNN). The span at 158 to 167 (DDGSPKDKEF) shows a compositional bias: basic and acidic residues. The Lon N-terminal domain occupies 177 to 395 (PPFLAIAMKD…LSLQLLQVEA (219 aa)). 543-550 (GPPGTGKT) is an ATP binding site. Over residues 775–785 (SVISDKAKKDA) the composition is skewed to basic and acidic residues. The disordered stretch occupies residues 775 to 821 (SVISDKAKKDAGSSSIESNDSNTEAKVSTTTENEKKQEQKQKQDEEI). Residues 790-805 (IESNDSNTEAKVSTTT) are compositionally biased toward polar residues. The span at 806–821 (ENEKKQEQKQKQDEEI) shows a compositional bias: basic and acidic residues. The Lon proteolytic domain occupies 856–1044 (TLNPGVATGL…SEVFEHLFKG (189 aa)). Catalysis depends on residues Ser950 and Lys993.

This sequence belongs to the peptidase S16 family. As to quaternary structure, homohexamer or homoheptamer. Organized in a ring with a central cavity.

Its subcellular location is the mitochondrion matrix. It catalyses the reaction Hydrolysis of proteins in presence of ATP.. ATP-dependent serine protease that mediates the selective degradation of misfolded, unassembled or oxidatively damaged polypeptides as well as certain short-lived regulatory proteins in the mitochondrial matrix. May also have a chaperone function in the assembly of inner membrane protein complexes. Participates in the regulation of mitochondrial gene expression and in the maintenance of the integrity of the mitochondrial genome. Binds to mitochondrial DNA in a site-specific manner. The protein is Lon protease homolog, mitochondrial of Candida dubliniensis (strain CD36 / ATCC MYA-646 / CBS 7987 / NCPF 3949 / NRRL Y-17841) (Yeast).